Here is a 343-residue protein sequence, read N- to C-terminus: Ribosomal RNA small subunit methyltransferase C (343 aa).

The protein belongs to the methyltransferase superfamily. RsmC family. In terms of assembly, monomer.

The protein localises to the cytoplasm. It carries out the reaction guanosine(1207) in 16S rRNA + S-adenosyl-L-methionine = N(2)-methylguanosine(1207) in 16S rRNA + S-adenosyl-L-homocysteine + H(+). Its function is as follows. Specifically methylates the guanine in position 1207 of 16S rRNA in the 30S particle. This is Ribosomal RNA small subunit methyltransferase C from Escherichia coli O6:H1 (strain CFT073 / ATCC 700928 / UPEC).